We begin with the raw amino-acid sequence, 2063 residues long: Nuclear receptor coactivator 6 (2063 aa).

Residues 1-928 (MVLDDLPNLE…PPRKKKNSQQ (928 aa)) form a TBP/GTF2A-binding region region. Residues 1–1057 (MVLDDLPNLE…LPVSQNVHPP (1057 aa)) are CREBBP-binding region. The NCOA1-binding region stretch occupies residues 1–1310 (MVLDDLPNLE…QTHKLDSVVV (1310 aa)). Asymmetric dimethylarginine is present on arginine 95. Disordered stretches follow at residues 184 to 251 (IPPG…VNRQ), 281 to 549 (QQQQ…APQL), and 789 to 811 (RPPGPSPHMAQQHGDPATTANND). The span at 281-300 (QQQQQLQARPPQQHQQQQPQ) shows a compositional bias: low complexity. Polar residues-rich tracts occupy residues 353–368 (MQQQLQARPSLATVQT), 379–406 (GSQQASQAHTNFPQMSNPGQFTAPQMKS), 417–453 (PLQQPHLTNKSPASSPSSFQQGSPASSPTVNQTQQQM), 462–502 (PLPQ…QGPQ), and 522–549 (GQANPNFMQGQVPSTTATTPGNSGAPQL). Positions 773-927 (VNNSPSQVMG…KPPRKKKNSQ (155 aa)) are NCOA6IP-binding region. Serine 884 is modified (phosphoserine; by MAPK; in vitro). Residues 887–891 (LVNLL) carry the LXXLL motif 1 motif. 3 disordered regions span residues 899–1278 (HFGV…LNPT), 1310–1353 (VNSG…KAPK), and 1448–1474 (EVKMVVPEDQSKKDGQPSDPNKLPSVE). Residues 903–912 (NNKQNNTNAN) show a composition bias toward low complexity. Residues 913-925 (KPKKKKPPRKKKN) show a composition bias toward basic residues. A compositionally biased stretch (low complexity) spans 982 to 992 (PLQQMPPQLMQ). The segment covering 995-1020 (APPPQPPQQQPQPQLPQQQQPPPPSQ) has biased composition (pro residues). Over residues 1021–1041 (PQSQQQQQQQQQMMMMLMMQQ) the composition is skewed to low complexity. 2 positions are modified to asymmetric dimethylarginine: arginine 1047 and arginine 1058. Residues 1063-1075 (PDSQRMPMQQSGS) show a composition bias toward polar residues. At arginine 1096 the chain carries Asymmetric dimethylarginine. Polar residues-rich tracts occupy residues 1104–1125 (PLGSNSRKMVYQESPQNPSSSP), 1173–1191 (LSATQGATPQQPPVNSLPS), and 1202–1214 (APTQTSRPKTPNR). Over residues 1219–1232 (PYYPQTPNNRPPST) the composition is skewed to pro residues. A compositionally biased stretch (polar residues) spans 1310–1320 (VNSGKQSNSGA). A compositionally biased stretch (low complexity) spans 1322–1345 (KRASPSNSRRSSPGSSRKTTPSPG). Positions 1491-1495 (LSQLL) match the LXXLL motif 2 motif. The EP300/CRSP3-binding region stretch occupies residues 1641–2063 (SEGQSAAQSN…AVQSKRRKSK (423 aa)). The disordered stretch occupies residues 1738–1820 (ATPVQLPSPP…VSSSKGKGKV (83 aa)). The segment covering 1750–1763 (SSPVVPSHPPVQQV) has biased composition (low complexity). Polar residues predominate over residues 1773–1798 (PQVNTSADQNTLPSSQSTTMVSPLLT). Low complexity predominate over residues 1799-1815 (NSPGSSGNRRSPVSSSK). Lysine 1819 and lysine 1822 each carry N6-acetyllysine. Disordered stretches follow at residues 1837-1908 (GSLE…LPGG) and 1995-2063 (IVSG…RKSK). A compositionally biased stretch (basic and acidic residues) spans 2002–2011 (EPKEIVEKSK). Phosphoserine is present on serine 2018.

In terms of assembly, monomer and homodimer. Interacts with RBM39. Interacts in vitro with the basal transcription factors GTF2A and TBP, suggesting an autonomous transactivation function. Interacts with NCOA1, CRSP3, RBM14, the histone acetyltransferases EP300 and CREBBP, and with the methyltransferases NCOA6IP and PRMT2/HRMT1L1. Component of the MLL2/3 complex (also named ASCOM complex), at least composed of KMT2D/MLL2 or KMT2C/MLL3, ASH2L, RBBP5, WDR5, NCOA6, DPY30, KDM6A, PAXIP1/PTIP, PAGR1 and alpha- and beta-tubulin. Interacts with ZNF335; may enhance ligand-dependent transcriptional activation by nuclear hormone receptors. In terms of processing, phosphorylated by PRKDC. Phosphorylation on Ser-884 leads to a strong decrease in binding to ESR1 and ESR2. In terms of tissue distribution, ubiquitous. Highly expressed in brain, prostate, testis and ovary; weakly expressed in lung, thymus and small intestine.

It localises to the nucleus. Nuclear receptor coactivator that directly binds nuclear receptors and stimulates the transcriptional activities in a hormone-dependent fashion. Coactivates expression in an agonist- and AF2-dependent manner. Involved in the coactivation of different nuclear receptors, such as for steroids (GR and ERs), retinoids (RARs and RXRs), thyroid hormone (TRs), vitamin D3 (VDR) and prostanoids (PPARs). Probably functions as a general coactivator, rather than just a nuclear receptor coactivator. May also be involved in the coactivation of the NF-kappa-B pathway. May coactivate expression via a remodeling of chromatin and its interaction with histone acetyltransferase proteins. In Homo sapiens (Human), this protein is Nuclear receptor coactivator 6 (NCOA6).